Here is a 404-residue protein sequence, read N- to C-terminus: F-box protein At3g57590 (404 aa).

Residues 1–47 (MEPIPNDLILEIFSRLPAKSVIGFRTLSKHWASILRSPVFTELFLTR) form the F-box domain.

The polypeptide is F-box protein At3g57590 (Arabidopsis thaliana (Mouse-ear cress)).